The chain runs to 150 residues: Large ribosomal subunit protein uL13 (150 aa).

The protein belongs to the universal ribosomal protein uL13 family. In terms of assembly, part of the 50S ribosomal subunit.

Its function is as follows. This protein is one of the early assembly proteins of the 50S ribosomal subunit, although it is not seen to bind rRNA by itself. It is important during the early stages of 50S assembly. In Chlamydia trachomatis serovar A (strain ATCC VR-571B / DSM 19440 / HAR-13), this protein is Large ribosomal subunit protein uL13.